The sequence spans 203 residues: Histidine biosynthesis bifunctional protein HisIE (203 aa).

Residues 1 to 114 (MLTEQQRREL…FGDASHQWLF (114 aa)) are phosphoribosyl-AMP cyclohydrolase. Residues 115–203 (LYQLEQLLAE…VIDNLRKRHQ (89 aa)) form a phosphoribosyl-ATP pyrophosphohydrolase region.

The protein in the N-terminal section; belongs to the PRA-CH family. It in the C-terminal section; belongs to the PRA-PH family.

It localises to the cytoplasm. It carries out the reaction 1-(5-phospho-beta-D-ribosyl)-ATP + H2O = 1-(5-phospho-beta-D-ribosyl)-5'-AMP + diphosphate + H(+). It catalyses the reaction 1-(5-phospho-beta-D-ribosyl)-5'-AMP + H2O = 1-(5-phospho-beta-D-ribosyl)-5-[(5-phospho-beta-D-ribosylamino)methylideneamino]imidazole-4-carboxamide. Its pathway is amino-acid biosynthesis; L-histidine biosynthesis; L-histidine from 5-phospho-alpha-D-ribose 1-diphosphate: step 2/9. The protein operates within amino-acid biosynthesis; L-histidine biosynthesis; L-histidine from 5-phospho-alpha-D-ribose 1-diphosphate: step 3/9. This chain is Histidine biosynthesis bifunctional protein HisIE (hisI), found in Salmonella typhimurium (strain LT2 / SGSC1412 / ATCC 700720).